The primary structure comprises 1227 residues: Beta-alanyl-bioamine nonribosomal peptide synthetase (1227 aa).

The segment at 1–850 (MPQSTAQLKS…FGKNSRDFKL (850 aa)) is adenylation. Positions 851–931 (SRGRERARKV…SILTSLQNTE (81 aa)) constitute a Carrier domain. Position 892 is an O-(pantetheine 4'-phosphoryl)serine (S892). A condensation region spans residues 932–1227 (SDFLKTQEPF…YMIKELNPSS (296 aa)).

Belongs to the NRP synthetase family. Pantetheine 4'-phosphate serves as cofactor. In virgin and paired males, bilaterally expressed in some cells in the head. During pairing, expressed throughout the ventral side of the body probably in ciliated neurons. Highly expressed in virgin females in cells throughout the body and only weakly expressed in sexually mature females. In virgin females, expressed in some cells in the head and on the dorsal surface and lateral edges of body.

It catalyses the reaction tryptamine + beta-alanine + ATP = beta-alanyl-tryptamine + AMP + diphosphate + H(+). The enzyme catalyses beta-alanine + ATP + H(+) = beta-alanyl-5'-AMP + diphosphate. The catalysed reaction is beta-alanyl-5'-AMP + holo-[peptidyl-carrier protein] = beta-alanyl-[peptidyl-carrier protein] + AMP + H(+). It carries out the reaction beta-alanyl-[peptidyl-carrier protein] + tryptamine = beta-alanyl-tryptamine + holo-[peptidyl-carrier protein] + H(+). In terms of biological role, catalyzes the condensation of beta-alanine with tryptamine to form beta-alanyl-tryptamine (BATT). Beta-alanyl-tryptamine is an essential pheromone produced by the male that stimulates female sexual development during pairing. This is Beta-alanyl-bioamine nonribosomal peptide synthetase from Schistosoma mansoni (Blood fluke).